The primary structure comprises 262 residues: Tryptophan synthase alpha chain (262 aa).

Active-site proton acceptor residues include Glu-48 and Asp-59.

It belongs to the TrpA family. Tetramer of two alpha and two beta chains.

It carries out the reaction (1S,2R)-1-C-(indol-3-yl)glycerol 3-phosphate + L-serine = D-glyceraldehyde 3-phosphate + L-tryptophan + H2O. Its pathway is amino-acid biosynthesis; L-tryptophan biosynthesis; L-tryptophan from chorismate: step 5/5. In terms of biological role, the alpha subunit is responsible for the aldol cleavage of indoleglycerol phosphate to indole and glyceraldehyde 3-phosphate. The protein is Tryptophan synthase alpha chain of Helicobacter pylori (strain HPAG1).